A 135-amino-acid chain; its full sequence is Hydroxylaminobenzene mutase HabA (135 aa).

The next 4 helical transmembrane spans lie at 5 to 25 (LFASGLVLFLLGLVTGLLVPV), 33 to 55 (VAGHLQGMTNGPLLIIAGLLWPY), 67 to 87 (FWLLIYGTYANWLGVQLAALW), and 113 to 133 (FLLFSLIPAMFAAPIILLIGI).

It localises to the cell membrane. The enzyme catalyses N-phenylhydroxylamine = 2-aminophenol. In terms of biological role, catalyzes the rearrangement of hydroxylaminobenzene to 2-aminophenol. Involved in the degradation of nitrobenzene. The sequence is that of Hydroxylaminobenzene mutase HabA (habA) from Ectopseudomonas oleovorans (Pseudomonas oleovorans).